The primary structure comprises 462 residues: Argininosuccinate lyase (462 aa).

It belongs to the lyase 1 family. Argininosuccinate lyase subfamily.

The protein resides in the cytoplasm. It catalyses the reaction 2-(N(omega)-L-arginino)succinate = fumarate + L-arginine. Its pathway is amino-acid biosynthesis; L-arginine biosynthesis; L-arginine from L-ornithine and carbamoyl phosphate: step 3/3. This is Argininosuccinate lyase from Chloroflexus aggregans (strain MD-66 / DSM 9485).